A 367-amino-acid chain; its full sequence is Developmentally-regulated GTP-binding protein 1 (367 aa).

The interval 2–16 (SGTLARIAEIEAEMA) is required for interaction with STK16. The OBG-type G domain occupies 65-290 (ARIGFVGFPS…LLEKIWDYLQ (226 aa)). Residues 71–78 (GFPSVGKS), 96–100 (FTTLT), 117–120 (DLPG), 248–251 (NKID), and 271–273 (SAH) contribute to the GTP site. Residues Ser-78 and Thr-98 each coordinate Mg(2+). Positions 290–366 (QLVRIYTKPK…EDEDVIQIVK (77 aa)) constitute a TGS domain.

It belongs to the TRAFAC class OBG-HflX-like GTPase superfamily. OBG GTPase family. Mg(2+) serves as cofactor. The cofactor is K(+). As to expression, expressed in many adult amd embryonic tissues. In adults, highest levels in ovaries and testes, followed by skeletal muscle, stomach, brain, kidney and liver. Weak expression in heart and brain.

Its subcellular location is the nucleus. It localises to the cytoplasm. The enzyme catalyses GTP + H2O = GDP + phosphate + H(+). Functionally, catalyzes the conversion of GTP to GDP through hydrolysis of the gamma-phosphate bond in GTP. Binds to microtubules and promotes microtubule polymerization and bundling. GTPase activity is not necessary for these microtubule-related functions. This Xenopus laevis (African clawed frog) protein is Developmentally-regulated GTP-binding protein 1 (drg1).